The following is a 62-amino-acid chain: Small ribosomal subunit protein bS21 (62 aa).

Residues 43–52 (VKKKLKSEAA) are compositionally biased toward basic and acidic residues. The interval 43-62 (VKKKLKSEAARKRKNRRRFK) is disordered. Basic residues predominate over residues 53 to 62 (RKRKNRRRFK).

This sequence belongs to the bacterial ribosomal protein bS21 family.

In Lactiplantibacillus plantarum (strain ATCC BAA-793 / NCIMB 8826 / WCFS1) (Lactobacillus plantarum), this protein is Small ribosomal subunit protein bS21.